Here is a 634-residue protein sequence, read N- to C-terminus: Probable potassium transport system protein Kup (634 aa).

Transmembrane regions (helical) follow at residues 19-39, 62-82, 113-133, 150-170, 177-197, 225-245, 259-279, 291-311, 349-369, 379-399, 406-426, and 431-451; these read AIGLMVGAVGVCYGDIGTSPL, VLSLIFWSLVWVVSIKYVIFV, FVVVAGLIGAALFYGDSMITP, GLEHWTVPLALIVLIGLFLIQ, IGILFGPVMVLWFGALAALGV, IGVAILGATVLALTGAEALYA, WFLLVLPALVLNYFGQGATIL, LLAPGWALLPMVALSTLATVI, IYIGGVNWALMVGVVLLVLGF, YGVAVTGTMLITTLLMGVVIW, LWLGVPFFCVMLAVDSLFFAA, and VIQGGAFPVIAGIVIFILMST.

Belongs to the HAK/KUP transporter (TC 2.A.72) family.

The protein localises to the cell inner membrane. It carries out the reaction K(+)(in) + H(+)(in) = K(+)(out) + H(+)(out). Transport of potassium into the cell. Likely operates as a K(+):H(+) symporter. This Pseudomonas aeruginosa (strain UCBPP-PA14) protein is Probable potassium transport system protein Kup.